We begin with the raw amino-acid sequence, 229 residues long: Large ribosomal subunit protein uL1 (229 aa).

The protein belongs to the universal ribosomal protein uL1 family. Part of the 50S ribosomal subunit.

Binds directly to 23S rRNA. The L1 stalk is quite mobile in the ribosome, and is involved in E site tRNA release. Functionally, protein L1 is also a translational repressor protein, it controls the translation of the L11 operon by binding to its mRNA. The chain is Large ribosomal subunit protein uL1 from Ureaplasma parvum serovar 3 (strain ATCC 27815 / 27 / NCTC 11736).